Here is a 199-residue protein sequence, read N- to C-terminus: Protein GrpE (199 aa).

The segment at 1–40 (MEKKKHGTNSISEALKVKAAVEQETATPEPTPQSETESAD) is disordered. A compositionally biased stretch (polar residues) spans 24-36 (ETATPEPTPQSET).

This sequence belongs to the GrpE family. As to quaternary structure, homodimer.

The protein localises to the cytoplasm. Functionally, participates actively in the response to hyperosmotic and heat shock by preventing the aggregation of stress-denatured proteins, in association with DnaK and GrpE. It is the nucleotide exchange factor for DnaK and may function as a thermosensor. Unfolded proteins bind initially to DnaJ; upon interaction with the DnaJ-bound protein, DnaK hydrolyzes its bound ATP, resulting in the formation of a stable complex. GrpE releases ADP from DnaK; ATP binding to DnaK triggers the release of the substrate protein, thus completing the reaction cycle. Several rounds of ATP-dependent interactions between DnaJ, DnaK and GrpE are required for fully efficient folding. The protein is Protein GrpE of Geotalea uraniireducens (strain Rf4) (Geobacter uraniireducens).